Here is a 728-residue protein sequence, read N- to C-terminus: Polyribonucleotide nucleotidyltransferase (728 aa).

Mg(2+) contacts are provided by D503 and D509. Positions 570 to 629 constitute a KH domain; sequence PRLTTIKIPSDCIGMVIGKGGETIRGITEETGAEINIADDGTVTIACTTKEGTDAALATI. The 75-residue stretch at 639–713 folds into the S1 motif domain; the sequence is GNIYVGKVRD…GKTKFALSIK (75 aa).

It belongs to the polyribonucleotide nucleotidyltransferase family. Requires Mg(2+) as cofactor.

The protein resides in the cytoplasm. It carries out the reaction RNA(n+1) + phosphate = RNA(n) + a ribonucleoside 5'-diphosphate. Involved in mRNA degradation. Catalyzes the phosphorolysis of single-stranded polyribonucleotides processively in the 3'- to 5'-direction. The sequence is that of Polyribonucleotide nucleotidyltransferase from Chlorobium chlorochromatii (strain CaD3).